The following is a 184-amino-acid chain: Glutathione-regulated potassium-efflux system ancillary protein KefG (184 aa).

Belongs to the NAD(P)H dehydrogenase (quinone) family. KefG subfamily. In terms of assembly, interacts with KefB.

Its subcellular location is the cell inner membrane. It carries out the reaction a quinone + NADH + H(+) = a quinol + NAD(+). The catalysed reaction is a quinone + NADPH + H(+) = a quinol + NADP(+). Regulatory subunit of a potassium efflux system that confers protection against electrophiles. Required for full activity of KefB. The polypeptide is Glutathione-regulated potassium-efflux system ancillary protein KefG (Shigella dysenteriae serotype 1 (strain Sd197)).